The primary structure comprises 363 residues: Cyclin-D1-1 (363 aa).

A disordered region spans residues 39–77 (ELEREGEPAQGSSPSSSLSCAAAAAAAADDDDEDEDEHG). The segment covering 50 to 65 (SSPSSSLSCAAAAAAA) has biased composition (low complexity). Over residues 66 to 75 (ADDDDEDEDE) the composition is skewed to acidic residues.

Belongs to the cyclin family. Cyclin D subfamily.

This is Cyclin-D1-1 (CYCD1-1) from Oryza sativa subsp. japonica (Rice).